Reading from the N-terminus, the 126-residue chain is UPF0738 protein BH2850 (126 aa).

Belongs to the UPF0738 family.

In Halalkalibacterium halodurans (strain ATCC BAA-125 / DSM 18197 / FERM 7344 / JCM 9153 / C-125) (Bacillus halodurans), this protein is UPF0738 protein BH2850.